The following is a 365-amino-acid chain: 3-dehydroquinate synthase (365 aa).

Residues 106 to 110 (GVIGD), 130 to 131 (TT), Lys142, Lys151, and 169 to 172 (FFAT) contribute to the NAD(+) site. Residues Glu184, His247, and His264 each coordinate Zn(2+).

This sequence belongs to the sugar phosphate cyclases superfamily. Dehydroquinate synthase family. NAD(+) serves as cofactor. The cofactor is Co(2+). It depends on Zn(2+) as a cofactor.

The protein resides in the cytoplasm. It catalyses the reaction 7-phospho-2-dehydro-3-deoxy-D-arabino-heptonate = 3-dehydroquinate + phosphate. It functions in the pathway metabolic intermediate biosynthesis; chorismate biosynthesis; chorismate from D-erythrose 4-phosphate and phosphoenolpyruvate: step 2/7. Its function is as follows. Catalyzes the conversion of 3-deoxy-D-arabino-heptulosonate 7-phosphate (DAHP) to dehydroquinate (DHQ). This is 3-dehydroquinate synthase from Listeria monocytogenes serotype 4b (strain F2365).